A 360-amino-acid polypeptide reads, in one-letter code: MERNHNPDNCNVLNFFFADKKNKRRNFGQIVSDVGRICYSVSLSLGEPTTMGRNNLTRPSEFILLGLSSRPEDQKPLFAVFLPIYLITVIGNLLIILAIRSDTRLQTPMYFFLSILSFVDICYVTVIIPKMLVNFLSETKTISYSECLTQMYFFLAFGNTDSYLLAAMAIDRYVAICNPFHYITIMSHRCCVLLLVLSFCIPHFHSLLHILLTNQLIFCASNVIHHFFCDDQPVLKLSCSSHFVKEITVMTEGLAVIMTPFSCIIISYLRILITVLKIPSAAGKRKAFSTCGSHLTVVTLFYGSISYLYFQPLSNYTVKDQIATIIYTVLTPMLNPFIYSLRNKDMKQGLAKLMHRMKCQ.

Residues 1–75 (MERNHNPDNC…GLSSRPEDQK (75 aa)) are Extracellular-facing. Residue Asn55 is glycosylated (N-linked (GlcNAc...) asparagine). Residues 76–99 (PLFAVFLPIYLITVIGNLLIILAI) traverse the membrane as a helical segment. Residues 100-107 (RSDTRLQT) lie on the Cytoplasmic side of the membrane. A helical transmembrane segment spans residues 108–129 (PMYFFLSILSFVDICYVTVIIP). Residues 130–150 (KMLVNFLSETKTISYSECLTQ) lie on the Extracellular side of the membrane. Cys147 and Cys239 are disulfide-bonded. Residues 151–170 (MYFFLAFGNTDSYLLAAMAI) traverse the membrane as a helical segment. Residues 171 to 189 (DRYVAICNPFHYITIMSHR) lie on the Cytoplasmic side of the membrane. The chain crosses the membrane as a helical span at residues 190 to 208 (CCVLLLVLSFCIPHFHSLL). Residues 209–246 (HILLTNQLIFCASNVIHHFFCDDQPVLKLSCSSHFVKE) are Extracellular-facing. Residues 247-269 (ITVMTEGLAVIMTPFSCIIISYL) form a helical membrane-spanning segment. The Cytoplasmic portion of the chain corresponds to 270 to 286 (RILITVLKIPSAAGKRK). Residues 287-309 (AFSTCGSHLTVVTLFYGSISYLY) form a helical membrane-spanning segment. At 310–321 (FQPLSNYTVKDQ) the chain is on the extracellular side. N-linked (GlcNAc...) asparagine glycosylation occurs at Asn315. The chain crosses the membrane as a helical span at residues 322-341 (IATIIYTVLTPMLNPFIYSL). Residues 342 to 360 (RNKDMKQGLAKLMHRMKCQ) are Cytoplasmic-facing.

Belongs to the G-protein coupled receptor 1 family.

It is found in the cell membrane. Functionally, odorant receptor. This is Olfactory receptor 1L1 (OR1L1) from Homo sapiens (Human).